Here is a 1067-residue protein sequence, read N- to C-terminus: Ubiquitin conjugation factor E4 A (1067 aa).

Residues 33 to 57 are disordered; it reads KEQLKQQSDELPASPDDSDNSVSES. Position 386 is an N6-acetyllysine (K386). In terms of domain architecture, U-box spans 987–1061; it reads DACDEFLDPI…QRWLAERKQQ (75 aa).

This sequence belongs to the ubiquitin conjugation factor E4 family.

It is found in the cytoplasm. The catalysed reaction is S-ubiquitinyl-[E2 ubiquitin-conjugating enzyme]-L-cysteine + [acceptor protein]-L-lysine = [E2 ubiquitin-conjugating enzyme]-L-cysteine + N(6)-ubiquitinyl-[acceptor protein]-L-lysine.. The protein operates within protein modification; protein ubiquitination. Its function is as follows. Ubiquitin-protein ligase that probably functions as an E3 ligase in conjunction with specific E1 and E2 ligases. May also function as an E4 ligase mediating the assembly of polyubiquitin chains on substrates ubiquitinated by another E3 ubiquitin ligase. Mediates 'Lys-48'-linked polyubiquitination of substrates. The protein is Ubiquitin conjugation factor E4 A of Bos taurus (Bovine).